A 96-amino-acid polypeptide reads, in one-letter code: Large ribosomal subunit protein uL23 (96 aa).

The protein belongs to the universal ribosomal protein uL23 family. As to quaternary structure, part of the 50S ribosomal subunit. Contacts protein L29, and trigger factor when it is bound to the ribosome.

Its function is as follows. One of the early assembly proteins it binds 23S rRNA. One of the proteins that surrounds the polypeptide exit tunnel on the outside of the ribosome. Forms the main docking site for trigger factor binding to the ribosome. The polypeptide is Large ribosomal subunit protein uL23 (Onion yellows phytoplasma (strain OY-M)).